The chain runs to 198 residues: GTP cyclohydrolase-2 (198 aa).

52 to 56 (RMHSE) serves as a coordination point for GTP. Residues Cys57, Cys68, and Cys70 each contribute to the Zn(2+) site. GTP contacts are provided by residues Gln73, 94–96 (EGR), and Thr116. Catalysis depends on Asp128, which acts as the Proton acceptor. The Nucleophile role is filled by Arg130. GTP contacts are provided by Thr151 and Lys156.

This sequence belongs to the GTP cyclohydrolase II family. The cofactor is Zn(2+).

The catalysed reaction is GTP + 4 H2O = 2,5-diamino-6-hydroxy-4-(5-phosphoribosylamino)-pyrimidine + formate + 2 phosphate + 3 H(+). It participates in cofactor biosynthesis; riboflavin biosynthesis; 5-amino-6-(D-ribitylamino)uracil from GTP: step 1/4. In terms of biological role, catalyzes the conversion of GTP to 2,5-diamino-6-ribosylamino-4(3H)-pyrimidinone 5'-phosphate (DARP), formate and pyrophosphate. The sequence is that of GTP cyclohydrolase-2 from Vibrio vulnificus (strain CMCP6).